The following is a 203-amino-acid chain: Superoxide dismutase [Mn] (203 aa).

Mn(2+) contacts are provided by histidine 27, histidine 81, aspartate 167, and histidine 171.

The protein belongs to the iron/manganese superoxide dismutase family. Homodimer. It depends on Mn(2+) as a cofactor.

It carries out the reaction 2 superoxide + 2 H(+) = H2O2 + O2. Its function is as follows. Destroys superoxide anion radicals which are normally produced within the cells and which are toxic to biological systems. The protein is Superoxide dismutase [Mn] (sodA) of Buchnera aphidicola subsp. Acyrthosiphon pisum (strain APS) (Acyrthosiphon pisum symbiotic bacterium).